Consider the following 1241-residue polypeptide: ATP-dependent helicase/nuclease subunit A (1241 aa).

Residues 12-485 (SQWTDDQWKA…IDLAKNFRSR (474 aa)) form the UvrD-like helicase ATP-binding domain. 33-40 (AAAGSGKT) contributes to the ATP binding site. Residues 505-805 (GEIDYDADAE…RIMTIHKSKG (301 aa)) enclose the UvrD-like helicase C-terminal domain.

The protein belongs to the helicase family. AddA subfamily. As to quaternary structure, heterodimer of AddA and AddB/RexB. Mg(2+) serves as cofactor.

It catalyses the reaction Couples ATP hydrolysis with the unwinding of duplex DNA by translocating in the 3'-5' direction.. The enzyme catalyses ATP + H2O = ADP + phosphate + H(+). Its function is as follows. The heterodimer acts as both an ATP-dependent DNA helicase and an ATP-dependent, dual-direction single-stranded exonuclease. Recognizes the chi site generating a DNA molecule suitable for the initiation of homologous recombination. The AddA nuclease domain is required for chi fragment generation; this subunit has the helicase and 3' -&gt; 5' nuclease activities. The polypeptide is ATP-dependent helicase/nuclease subunit A (Bacillus cereus (strain Q1)).